A 118-amino-acid chain; its full sequence is MRSAKLKFEKRRSRIRHKISKTSHSVRLSIFKSGRHIYAQIIDDSKSITIAAASTLDEKIKKLKKSHCNIENAIKVGEEIAKKADSAGIQDVVFDRGGYKYHGVVKALADAAREKIKF.

Belongs to the universal ribosomal protein uL18 family. Part of the 50S ribosomal subunit; part of the 5S rRNA/L5/L18/L25 subcomplex. Contacts the 5S and 23S rRNAs.

In terms of biological role, this is one of the proteins that bind and probably mediate the attachment of the 5S RNA into the large ribosomal subunit, where it forms part of the central protuberance. The polypeptide is Large ribosomal subunit protein uL18 (Rickettsia peacockii (strain Rustic)).